A 333-amino-acid polypeptide reads, in one-letter code: Outer membrane protein assembly factor BamC (333 aa).

A signal peptide spans 1 to 18 (MKKCLFPLSVLAVIVATG). A lipid anchor (N-palmitoyl cysteine) is attached at Cys-19. A lipid anchor (S-diacylglycerol cysteine) is attached at Cys-19.

Belongs to the BamC family. As to quaternary structure, part of the Bam complex.

The protein resides in the cell outer membrane. Part of the outer membrane protein assembly complex, which is involved in assembly and insertion of beta-barrel proteins into the outer membrane. This is Outer membrane protein assembly factor BamC from Actinobacillus succinogenes (strain ATCC 55618 / DSM 22257 / CCUG 43843 / 130Z).